Consider the following 309-residue polypeptide: Probable manganese-dependent inorganic pyrophosphatase (309 aa).

6 residues coordinate Mn(2+): His-9, Asp-13, Asp-15, Asp-75, His-97, and Asp-149.

The protein belongs to the PPase class C family. The cofactor is Mn(2+).

The protein localises to the cytoplasm. The catalysed reaction is diphosphate + H2O = 2 phosphate + H(+). This Bacillus cereus (strain ZK / E33L) protein is Probable manganese-dependent inorganic pyrophosphatase.